The chain runs to 242 residues: Outer membrane protein class 4 (242 aa).

The N-terminal stretch at 1-22 (MTKQLKLSALFVALLASGTAVA) is a signal peptide. Tandem repeats lie at residues 69-70 (AP), 71-72 (EP), 73-74 (EP), 75-76 (EP), 77-78 (EP), 79-80 (AP), and 81-82 (AP). The 7 X 2 AA tandem repeats of X-P stretch occupies residues 69–82 (APEPEPEPEPAPAP). The region spanning 92–229 (YVDETISLSA…RVDVKIRSIV (138 aa)) is the OmpA-like domain. Cysteine 191 and cysteine 214 are disulfide-bonded.

Belongs to the outer membrane OOP (TC 1.B.6) superfamily.

It is found in the cell outer membrane. This Neisseria meningitidis serogroup A / serotype 4A (strain DSM 15465 / Z2491) protein is Outer membrane protein class 4 (rmpM).